A 180-amino-acid chain; its full sequence is Interleukin-17B (180 aa).

An N-terminal signal peptide occupies residues 1 to 22 (MDWPHSLLFLLAISIFLAPSHP). Positions 22–44 (PRNTKGKRKGQGRPSPLAPGPHQ) are disordered. The span at 23–32 (RNTKGKRKGQ) shows a compositional bias: basic residues. N-linked (GlcNAc...) asparagine glycosylation is present at Asn75. Disulfide bonds link Cys121/Cys176 and Cys126/Cys178.

Belongs to the IL-17 family.

Its subcellular location is the secreted. Stimulates the release of tumor necrosis factor alpha and IL-1-beta from the monocytic cell line THP-1. The sequence is that of Interleukin-17B (Il17b) from Mus musculus (Mouse).